Reading from the N-terminus, the 258-residue chain is Phosphate import ATP-binding protein PstB (258 aa).

The 243-residue stretch at 5–247 (LDLKGVNIYY…EKIFSNPSQK (243 aa)) folds into the ABC transporter domain. 37–44 (GPSGCGKT) lines the ATP pocket.

Belongs to the ABC transporter superfamily. Phosphate importer (TC 3.A.1.7) family. The complex is composed of two ATP-binding proteins (PstB), two transmembrane proteins (PstC and PstA) and a solute-binding protein (PstS).

It localises to the cell membrane. It carries out the reaction phosphate(out) + ATP + H2O = ADP + 2 phosphate(in) + H(+). Part of the ABC transporter complex PstSACB involved in phosphate import. Responsible for energy coupling to the transport system. This is Phosphate import ATP-binding protein PstB from Mycolicibacterium paratuberculosis (strain ATCC BAA-968 / K-10) (Mycobacterium paratuberculosis).